A 399-amino-acid polypeptide reads, in one-letter code: Probable aspartate/prephenate aminotransferase (399 aa).

Residues Gly-39, Trp-125, and Asn-175 each coordinate L-aspartate. At Lys-239 the chain carries N6-(pyridoxal phosphate)lysine. Arg-375 serves as a coordination point for L-aspartate.

Belongs to the class-I pyridoxal-phosphate-dependent aminotransferase family. In terms of assembly, homodimer. The cofactor is pyridoxal 5'-phosphate.

Its subcellular location is the cytoplasm. The catalysed reaction is L-aspartate + 2-oxoglutarate = oxaloacetate + L-glutamate. It carries out the reaction L-arogenate + 2-oxoglutarate = prephenate + L-glutamate. Catalyzes the reversible conversion of aspartate and 2-oxoglutarate to glutamate and oxaloacetate. Can also transaminate prephenate in the presence of glutamate. The chain is Probable aspartate/prephenate aminotransferase (aatA) from Rickettsia typhi (strain ATCC VR-144 / Wilmington).